The chain runs to 431 residues: Enolase (431 aa).

Position 163 (Gln-163) interacts with (2R)-2-phosphoglycerate. Glu-205 functions as the Proton donor in the catalytic mechanism. Mg(2+) is bound by residues Asp-242, Glu-283, and Asp-310. (2R)-2-phosphoglycerate is bound by residues Lys-335, Arg-364, Ser-365, and Lys-386. Lys-335 serves as the catalytic Proton acceptor.

It belongs to the enolase family. Requires Mg(2+) as cofactor.

It is found in the cytoplasm. The protein localises to the secreted. It localises to the cell surface. It carries out the reaction (2R)-2-phosphoglycerate = phosphoenolpyruvate + H2O. It functions in the pathway carbohydrate degradation; glycolysis; pyruvate from D-glyceraldehyde 3-phosphate: step 4/5. Its function is as follows. Catalyzes the reversible conversion of 2-phosphoglycerate (2-PG) into phosphoenolpyruvate (PEP). It is essential for the degradation of carbohydrates via glycolysis. This chain is Enolase, found in Kineococcus radiotolerans (strain ATCC BAA-149 / DSM 14245 / SRS30216).